A 784-amino-acid polypeptide reads, in one-letter code: DNA ligase (784 aa).

Residues 35-39 (DAEYD), 84-85 (SL), and Glu117 each bind NAD(+). The N6-AMP-lysine intermediate role is filled by Lys119. Arg140, Glu177, Lys294, and Lys318 together coordinate NAD(+). Cys412, Cys415, Cys442, and Cys448 together coordinate Zn(2+). A BRCT domain is found at 703–784 (AEGLPLAGQT…FLALLRQLES (82 aa)).

Belongs to the NAD-dependent DNA ligase family. LigA subfamily. It depends on Mg(2+) as a cofactor. The cofactor is Mn(2+).

It carries out the reaction NAD(+) + (deoxyribonucleotide)n-3'-hydroxyl + 5'-phospho-(deoxyribonucleotide)m = (deoxyribonucleotide)n+m + AMP + beta-nicotinamide D-nucleotide.. In terms of biological role, DNA ligase that catalyzes the formation of phosphodiester linkages between 5'-phosphoryl and 3'-hydroxyl groups in double-stranded DNA using NAD as a coenzyme and as the energy source for the reaction. It is essential for DNA replication and repair of damaged DNA. The protein is DNA ligase of Azotobacter vinelandii (strain DJ / ATCC BAA-1303).